The following is a 286-amino-acid chain: Putative ribosome-inactivating protein (286 aa).

A signal peptide spans 1-21 (MNRFSVLMCLVILSIFHGVPT). 2 N-linked (GlcNAc...) asparagine glycosylation sites follow: N103 and N110. E185 is an active-site residue. N252 is a glycosylation site (N-linked (GlcNAc...) asparagine).

This sequence belongs to the ribosome-inactivating protein family. Type 1 RIP subfamily.

The enzyme catalyses Endohydrolysis of the N-glycosidic bond at one specific adenosine on the 28S rRNA.. This is Putative ribosome-inactivating protein from Cucumis ficifolius (Cucumis figarei).